The sequence spans 798 residues: Probable DEAD-box ATP-dependent RNA helicase 48 (798 aa).

3 disordered regions span residues 76–100 (KMWGNPDSGEKTAKSKQSHGPMSPK), 117–148 (DFWNENDGPVKKSDQGSRSGSDSIDSTSNSPI), and 236–257 (FRKNDSSTEEDSDEEGDEGKMI). The segment covering 132-148 (GSRSGSDSIDSTSNSPI) has biased composition (low complexity). Positions 242-252 (STEEDSDEEGD) are enriched in acidic residues. Positions 328 to 356 (KRFDESCISPLTLKALSASGILKMTRVQD) match the Q motif motif. In terms of domain architecture, Helicase ATP-binding spans 359-543 (LSECLDGKDA…QLVLKRDHSY (185 aa)). An ATP-binding site is contributed by 372-379 (AKTGTGKS). Positions 491–494 (DEAD) match the DEAD box motif. A Helicase C-terminal domain is found at 577 to 726 (LLKEHINNTP…SIVKHQVDQS (150 aa)).

The protein belongs to the DEAD box helicase family.

It carries out the reaction ATP + H2O = ADP + phosphate + H(+). This chain is Probable DEAD-box ATP-dependent RNA helicase 48 (RH48), found in Arabidopsis thaliana (Mouse-ear cress).